Consider the following 137-residue polypeptide: Large ribosomal subunit protein uL16 (137 aa).

The segment at 1–20 is disordered; that stretch reads MLQPSNRKYRKDFKGRNRGV. Positions 7–17 are enriched in basic residues; it reads RKYRKDFKGRN.

This sequence belongs to the universal ribosomal protein uL16 family. Part of the 50S ribosomal subunit.

Binds 23S rRNA and is also seen to make contacts with the A and possibly P site tRNAs. This is Large ribosomal subunit protein uL16 from Coxiella burnetii (strain CbuG_Q212) (Coxiella burnetii (strain Q212)).